The chain runs to 127 residues: Large ribosomal subunit protein bL17 (127 aa).

Belongs to the bacterial ribosomal protein bL17 family. As to quaternary structure, part of the 50S ribosomal subunit. Contacts protein L32.

The polypeptide is Large ribosomal subunit protein bL17 (Lactobacillus delbrueckii subsp. bulgaricus (strain ATCC 11842 / DSM 20081 / BCRC 10696 / JCM 1002 / NBRC 13953 / NCIMB 11778 / NCTC 12712 / WDCM 00102 / Lb 14)).